A 692-amino-acid polypeptide reads, in one-letter code: Elongation factor G (692 aa).

In terms of domain architecture, tr-type G spans 8–283 (KNTRNIGIMA…AVLDYLPSPV (276 aa)). GTP is bound by residues 17–24 (AHIDAGKT), 81–85 (DTPGH), and 135–138 (NKMD).

Belongs to the TRAFAC class translation factor GTPase superfamily. Classic translation factor GTPase family. EF-G/EF-2 subfamily.

It is found in the cytoplasm. Its function is as follows. Catalyzes the GTP-dependent ribosomal translocation step during translation elongation. During this step, the ribosome changes from the pre-translocational (PRE) to the post-translocational (POST) state as the newly formed A-site-bound peptidyl-tRNA and P-site-bound deacylated tRNA move to the P and E sites, respectively. Catalyzes the coordinated movement of the two tRNA molecules, the mRNA and conformational changes in the ribosome. The sequence is that of Elongation factor G from Exiguobacterium sibiricum (strain DSM 17290 / CCUG 55495 / CIP 109462 / JCM 13490 / 255-15).